Here is a 450-residue protein sequence, read N- to C-terminus: 3-phosphoshikimate 1-carboxyvinyltransferase (450 aa).

3 residues coordinate 3-phosphoshikimate: K28, S29, and R33. A phosphoenolpyruvate-binding site is contributed by K28. Positions 100 and 128 each coordinate phosphoenolpyruvate. 3-phosphoshikimate-binding residues include S173, Q175, D326, and K353. Residue Q175 participates in phosphoenolpyruvate binding. The Proton acceptor role is filled by D326. Positions 357 and 402 each coordinate phosphoenolpyruvate.

It belongs to the EPSP synthase family. In terms of assembly, monomer.

It is found in the cytoplasm. The catalysed reaction is 3-phosphoshikimate + phosphoenolpyruvate = 5-O-(1-carboxyvinyl)-3-phosphoshikimate + phosphate. It functions in the pathway metabolic intermediate biosynthesis; chorismate biosynthesis; chorismate from D-erythrose 4-phosphate and phosphoenolpyruvate: step 6/7. Catalyzes the transfer of the enolpyruvyl moiety of phosphoenolpyruvate (PEP) to the 5-hydroxyl of shikimate-3-phosphate (S3P) to produce enolpyruvyl shikimate-3-phosphate and inorganic phosphate. This Brucella melitensis biotype 1 (strain ATCC 23456 / CCUG 17765 / NCTC 10094 / 16M) protein is 3-phosphoshikimate 1-carboxyvinyltransferase.